Reading from the N-terminus, the 208-residue chain is Small ribosomal subunit protein uS5 (208 aa).

The 64-residue stretch at 48-111 (LEDEVLDINM…DAAKLDITYI (64 aa)) folds into the S5 DRBM domain.

This sequence belongs to the universal ribosomal protein uS5 family. In terms of assembly, part of the 30S ribosomal subunit. Contacts protein S4.

Functionally, with S4 and S12 plays an important role in translational accuracy. The sequence is that of Small ribosomal subunit protein uS5 from Methanosarcina barkeri (strain Fusaro / DSM 804).